A 256-amino-acid chain; its full sequence is Acetylglutamate kinase (256 aa).

Substrate is bound by residues 40 to 41, arginine 62, and asparagine 154; that span reads GG.

The protein belongs to the acetylglutamate kinase family. ArgB subfamily.

The protein localises to the cytoplasm. The enzyme catalyses N-acetyl-L-glutamate + ATP = N-acetyl-L-glutamyl 5-phosphate + ADP. It functions in the pathway amino-acid biosynthesis; L-arginine biosynthesis; N(2)-acetyl-L-ornithine from L-glutamate: step 2/4. Functionally, catalyzes the ATP-dependent phosphorylation of N-acetyl-L-glutamate. This Staphylococcus aureus (strain bovine RF122 / ET3-1) protein is Acetylglutamate kinase.